A 185-amino-acid chain; its full sequence is Ribosome maturation factor RimM (185 aa).

In terms of domain architecture, PRC barrel spans 106-185 (EGDYYWKDLM…SIEVDWDPGF (80 aa)).

The protein belongs to the RimM family. As to quaternary structure, binds ribosomal protein uS19.

Its subcellular location is the cytoplasm. Its function is as follows. An accessory protein needed during the final step in the assembly of 30S ribosomal subunit, possibly for assembly of the head region. Essential for efficient processing of 16S rRNA. May be needed both before and after RbfA during the maturation of 16S rRNA. It has affinity for free ribosomal 30S subunits but not for 70S ribosomes. This chain is Ribosome maturation factor RimM, found in Shigella dysenteriae serotype 1 (strain Sd197).